A 159-amino-acid chain; its full sequence is 2-C-methyl-D-erythritol 2,4-cyclodiphosphate synthase (159 aa).

Residues Asp8 and His10 each coordinate a divalent metal cation. 4-CDP-2-C-methyl-D-erythritol 2-phosphate is bound by residues 8–10 (DVH) and 34–35 (HS). Residue His42 coordinates a divalent metal cation. 4-CDP-2-C-methyl-D-erythritol 2-phosphate-binding positions include 56 to 58 (DIG), 132 to 135 (TTTE), and Arg142.

Belongs to the IspF family. In terms of assembly, homotrimer. A divalent metal cation is required as a cofactor.

It catalyses the reaction 4-CDP-2-C-methyl-D-erythritol 2-phosphate = 2-C-methyl-D-erythritol 2,4-cyclic diphosphate + CMP. Its pathway is isoprenoid biosynthesis; isopentenyl diphosphate biosynthesis via DXP pathway; isopentenyl diphosphate from 1-deoxy-D-xylulose 5-phosphate: step 4/6. Its function is as follows. Involved in the biosynthesis of isopentenyl diphosphate (IPP) and dimethylallyl diphosphate (DMAPP), two major building blocks of isoprenoid compounds. Catalyzes the conversion of 4-diphosphocytidyl-2-C-methyl-D-erythritol 2-phosphate (CDP-ME2P) to 2-C-methyl-D-erythritol 2,4-cyclodiphosphate (ME-CPP) with a corresponding release of cytidine 5-monophosphate (CMP). The polypeptide is 2-C-methyl-D-erythritol 2,4-cyclodiphosphate synthase (Chlorobium phaeobacteroides (strain BS1)).